Consider the following 569-residue polypeptide: Glycylpeptide N-tetradecanoyltransferase (569 aa).

The span at 1 to 18 shows a compositional bias: basic and acidic residues; sequence MPPTEESKPVDPAQEKQA. The tract at residues 1 to 82 is disordered; that stretch reads MPPTEESKPV…STESSAEVGL (82 aa). Residues 55-68 show a composition bias toward basic residues; the sequence is TKKKNKKKSKKKNK. Residues 158–161, 291–293, and 299–303 each bind tetradecanoyl-CoA; these read YKFW, LCI, and GKRLA. Val569 serves as the catalytic Proton acceptor; via carboxylate.

Belongs to the NMT family. As to quaternary structure, monomer.

The protein localises to the cytoplasm. It carries out the reaction N-terminal glycyl-[protein] + tetradecanoyl-CoA = N-tetradecanoylglycyl-[protein] + CoA + H(+). Its function is as follows. Adds a myristoyl group to the N-terminal glycine residue of certain cellular proteins. In Neurospora crassa (strain ATCC 24698 / 74-OR23-1A / CBS 708.71 / DSM 1257 / FGSC 987), this protein is Glycylpeptide N-tetradecanoyltransferase (gtt-1).